The following is a 105-amino-acid chain: Ig lambda chain C region (105 aa).

The region spanning 2–100 is the Ig-like domain; that stretch reads PKAAPTVNLF…EGTIVEKTVT (99 aa). A disulfide bond links cysteine 27 and cysteine 86.

In Sus scrofa (Pig), this protein is Ig lambda chain C region.